Consider the following 151-residue polypeptide: SsrA-binding protein (151 aa).

The protein belongs to the SmpB family.

It localises to the cytoplasm. Its function is as follows. Required for rescue of stalled ribosomes mediated by trans-translation. Binds to transfer-messenger RNA (tmRNA), required for stable association of tmRNA with ribosomes. tmRNA and SmpB together mimic tRNA shape, replacing the anticodon stem-loop with SmpB. tmRNA is encoded by the ssrA gene; the 2 termini fold to resemble tRNA(Ala) and it encodes a 'tag peptide', a short internal open reading frame. During trans-translation Ala-aminoacylated tmRNA acts like a tRNA, entering the A-site of stalled ribosomes, displacing the stalled mRNA. The ribosome then switches to translate the ORF on the tmRNA; the nascent peptide is terminated with the 'tag peptide' encoded by the tmRNA and targeted for degradation. The ribosome is freed to recommence translation, which seems to be the essential function of trans-translation. The sequence is that of SsrA-binding protein from Campylobacter concisus (strain 13826).